The primary structure comprises 83 residues: Arminin 3b (83 aa).

Positions 1–18 (MKIVFAILFLTFIALTYA) are cleaved as a signal peptide. The propeptide occupies 19–57 (RSFEDLKEEIKNEIEKEIFDDLEEESDELDNNVKKFNDA). Serine 80 bears the Serine amide mark.

This sequence belongs to the arminin family. As to expression, expressed in entodermal epithelium along the body column.

The protein localises to the secreted. It localises to the target cell membrane. Antimicrobial peptide with a broad-spectrum antimicrobial activity. Keeps its antibacterial activity under a wide range of salt concentrations that mimic physiological conditions of human blood, which is surprising, since Hydra is an obligate freshwater animal with nearly no salt tolerance. Does not affect red blood cells. This is Arminin 3b from Hydra vulgaris (Hydra).